The sequence spans 416 residues: 4-hydroxy-3-methylbut-2-en-1-yl diphosphate synthase (flavodoxin) (416 aa).

[4Fe-4S] cluster-binding residues include Cys-304, Cys-307, Cys-350, and Glu-357.

It belongs to the IspG family. [4Fe-4S] cluster is required as a cofactor.

It catalyses the reaction (2E)-4-hydroxy-3-methylbut-2-enyl diphosphate + oxidized [flavodoxin] + H2O + 2 H(+) = 2-C-methyl-D-erythritol 2,4-cyclic diphosphate + reduced [flavodoxin]. It participates in isoprenoid biosynthesis; isopentenyl diphosphate biosynthesis via DXP pathway; isopentenyl diphosphate from 1-deoxy-D-xylulose 5-phosphate: step 5/6. In terms of biological role, converts 2C-methyl-D-erythritol 2,4-cyclodiphosphate (ME-2,4cPP) into 1-hydroxy-2-methyl-2-(E)-butenyl 4-diphosphate. This Rhizobium leguminosarum bv. trifolii (strain WSM2304) protein is 4-hydroxy-3-methylbut-2-en-1-yl diphosphate synthase (flavodoxin).